Reading from the N-terminus, the 477-residue chain is Argininosuccinate lyase (477 aa).

The protein belongs to the lyase 1 family. Argininosuccinate lyase subfamily.

The protein localises to the cytoplasm. The enzyme catalyses 2-(N(omega)-L-arginino)succinate = fumarate + L-arginine. Its pathway is amino-acid biosynthesis; L-arginine biosynthesis; L-arginine from L-ornithine and carbamoyl phosphate: step 3/3. The chain is Argininosuccinate lyase from Acinetobacter baumannii (strain ACICU).